A 37-amino-acid chain; its full sequence is Potassium channel toxin alpha-KTx 3.9 (37 aa).

3 disulfide bridges follow: Cys-7–Cys-27, Cys-13–Cys-32, and Cys-17–Cys-34. The interval 25–32 is interaction with Ca(2+)-activated K(+) channels; sequence GKCMNRKC.

Belongs to the short scorpion toxin superfamily. Potassium channel inhibitor family. Alpha-KTx 03 subfamily. As to expression, expressed by the venom gland.

Its subcellular location is the secreted. In terms of biological role, binds and inhibits potassium channels. Intracerebroventricular injection into mice induces paralyzing symptoms followed by death. Its binding affinity to rat brain synaptosomes is 5-fold lower than this of KTX 1. The sequence is that of Potassium channel toxin alpha-KTx 3.9 (KTX3) from Buthus occitanus tunetanus (Common European scorpion).